The following is a 667-amino-acid chain: Small ribosomal subunit protein mS39 (667 aa).

The N-terminal 11 residues, 1–11 (MASSCSQALRH), are a transit peptide targeting the mitochondrion. The interval 199–226 (EAEQRSEEMEDIQDETQTKKGRSPKASD) is disordered. 6 PPR repeats span residues 249–283 (NTRS…RLKA), 284–323 (DVHI…KVKP), 324–360 (NLLT…SIEP), 361–400 (SLAS…SFTP), 482–516 (SSNA…GHGN), and 565–599 (TASS…NRVP).

Belongs to the mitochondrion-specific ribosomal protein mS39 family.

The protein localises to the mitochondrion. In terms of biological role, mitochondrial RNA-binding protein that may have a role in mitochondrial translation. The protein is Small ribosomal subunit protein mS39 (ptcd3) of Danio rerio (Zebrafish).